Consider the following 62-residue polypeptide: Large ribosomal subunit protein bL28 (62 aa).

The protein belongs to the bacterial ribosomal protein bL28 family.

The protein is Large ribosomal subunit protein bL28 of Streptococcus uberis (strain ATCC BAA-854 / 0140J).